The following is a 375-amino-acid chain: Major DNA-binding protein (375 aa).

The protein belongs to the herpesviridae DNA-binding protein family.

Its subcellular location is the host nucleus. Single-stranded DNA-binding protein required for DNA replication. The chain is Major DNA-binding protein from Equine herpesvirus 1 (strain HVS25A) (EHV-1).